A 287-amino-acid polypeptide reads, in one-letter code: Mitochondrial glycine transporter B (287 aa).

Solcar repeat units follow at residues 7-97 (HPAL…LKQH), 104-188 (PSAG…AKKA), and 198-282 (IAPL…LMAR). 6 helical membrane passes run 13 to 38 (FMCGSLSGTCSTLLFQPLDLVKTRLQ), 72 to 98 (GVSPSFMRCIPGVGIYFSTFYSLKQHY), 110 to 135 (VLLGAGARCVAGVAMLPFTVIKTRFE), 163 to 186 (GLTATLLRDAPFSGIYVMFYSQAK), 202 to 228 (VNFGCGVVAGILASLATQPADVIKTHM), and 257 to 275 (GAVPRSLRRTLMAAMAWTV).

This sequence belongs to the mitochondrial carrier (TC 2.A.29) family. SLC25A38 subfamily. In terms of tissue distribution, at 24 hours post-fertilization, expressed predominantly in posterior blood island, posterior cardinal vein and circulating blood. At 34 hours post-fertilization, becomes restricted to posterior blood island and circulating blood.

Its subcellular location is the mitochondrion inner membrane. It catalyses the reaction glycine(in) = glycine(out). Functionally, mitochondrial glycine transporter that imports glycine into the mitochondrial matrix. Plays an important role in providing glycine for the first enzymatic step in heme biosynthesis, the condensation of glycine with succinyl-CoA to produce 5-aminolevulinate (ALA) in the mitochondrial matrix. Required during erythropoiesis. In terms of biological role, may play a role as pro-apoptotic protein that induces caspase-dependent apoptosis. This chain is Mitochondrial glycine transporter B (slc25a38b), found in Danio rerio (Zebrafish).